Reading from the N-terminus, the 338-residue chain is Flap endonuclease 1 (338 aa).

Residues 1–98 (MGTDIGDLLL…DTLAKRHEVR (98 aa)) form an N-domain region. 7 residues coordinate Mg(2+): D27, D80, E152, E154, D173, D175, and D236. The interval 116-257 (EAYKYAQASS…RALKLVKEHG (142 aa)) is I-domain. The segment at 330 to 338 (SQSTLDQWF) is interaction with PCNA.

This sequence belongs to the XPG/RAD2 endonuclease family. FEN1 subfamily. Interacts with PCNA. PCNA stimulates the nuclease activity without altering cleavage specificity. The cofactor is Mg(2+).

Functionally, structure-specific nuclease with 5'-flap endonuclease and 5'-3' exonuclease activities involved in DNA replication and repair. During DNA replication, cleaves the 5'-overhanging flap structure that is generated by displacement synthesis when DNA polymerase encounters the 5'-end of a downstream Okazaki fragment. Binds the unpaired 3'-DNA end and kinks the DNA to facilitate 5' cleavage specificity. Cleaves one nucleotide into the double-stranded DNA from the junction in flap DNA, leaving a nick for ligation. Also involved in the base excision repair (BER) pathway. Acts as a genome stabilization factor that prevents flaps from equilibrating into structures that lead to duplications and deletions. Also possesses 5'-3' exonuclease activity on nicked or gapped double-stranded DNA. This Methanococcoides burtonii (strain DSM 6242 / NBRC 107633 / OCM 468 / ACE-M) protein is Flap endonuclease 1.